The sequence spans 471 residues: Argininosuccinate lyase (471 aa).

It belongs to the lyase 1 family. Argininosuccinate lyase subfamily.

The protein localises to the cytoplasm. The enzyme catalyses 2-(N(omega)-L-arginino)succinate = fumarate + L-arginine. The protein operates within amino-acid biosynthesis; L-arginine biosynthesis; L-arginine from L-ornithine and carbamoyl phosphate: step 3/3. This is Argininosuccinate lyase from Paramagnetospirillum magneticum (strain ATCC 700264 / AMB-1) (Magnetospirillum magneticum).